The following is a 437-amino-acid chain: Adenosylhomocysteinase (437 aa).

Substrate-binding residues include Thr-54, Asp-125, and Glu-170. 171–173 (TTT) lines the NAD(+) pocket. 2 residues coordinate substrate: Lys-200 and Asp-204. NAD(+) is bound by residues Asn-205, 234-239 (GYGWVG), Glu-258, Asn-293, 314-316 (AGH), and Asn-361.

The protein belongs to the adenosylhomocysteinase family. The cofactor is NAD(+).

It localises to the cytoplasm. It carries out the reaction S-adenosyl-L-homocysteine + H2O = L-homocysteine + adenosine. Its pathway is amino-acid biosynthesis; L-homocysteine biosynthesis; L-homocysteine from S-adenosyl-L-homocysteine: step 1/1. In terms of biological role, may play a key role in the regulation of the intracellular concentration of adenosylhomocysteine. The chain is Adenosylhomocysteinase from Pyrobaculum aerophilum (strain ATCC 51768 / DSM 7523 / JCM 9630 / CIP 104966 / NBRC 100827 / IM2).